Reading from the N-terminus, the 353-residue chain is Photosystem II D2 protein (353 aa).

At Thr2 the chain carries N-acetylthreonine. Thr2 is modified (phosphothreonine). A helical membrane pass occupies residues 41–61; that stretch reads CAYFAVGGWFTGTTFVTSWYT. Residue His118 participates in chlorophyll a binding. The chain crosses the membrane as a helical span at residues 125-141; that stretch reads GFMLRQFELARSVQLRP. Gln130 and Asn143 together coordinate pheophytin a. A helical transmembrane segment spans residues 153-166; it reads VFVSVFLIYPLGQS. Residue His198 coordinates chlorophyll a. A helical transmembrane segment spans residues 208-228; that stretch reads AALLCAIHGATVENTLFEDGD. 2 residues coordinate a plastoquinone: His215 and Phe262. His215 lines the Fe cation pocket. A Fe cation-binding site is contributed by His269. Residues 279 to 295 form a helical membrane-spanning segment; sequence GLWMSALGVVGLALNLR.

It belongs to the reaction center PufL/M/PsbA/D family. PSII is composed of 1 copy each of membrane proteins PsbA, PsbB, PsbC, PsbD, PsbE, PsbF, PsbH, PsbI, PsbJ, PsbK, PsbL, PsbM, PsbT, PsbX, PsbY, PsbZ, Psb30/Ycf12, at least 3 peripheral proteins of the oxygen-evolving complex and a large number of cofactors. It forms dimeric complexes. The cofactor is The D1/D2 heterodimer binds P680, chlorophylls that are the primary electron donor of PSII, and subsequent electron acceptors. It shares a non-heme iron and each subunit binds pheophytin, quinone, additional chlorophylls, carotenoids and lipids. There is also a Cl(-1) ion associated with D1 and D2, which is required for oxygen evolution. The PSII complex binds additional chlorophylls, carotenoids and specific lipids..

The protein resides in the plastid. It localises to the chloroplast thylakoid membrane. The catalysed reaction is 2 a plastoquinone + 4 hnu + 2 H2O = 2 a plastoquinol + O2. Photosystem II (PSII) is a light-driven water:plastoquinone oxidoreductase that uses light energy to abstract electrons from H(2)O, generating O(2) and a proton gradient subsequently used for ATP formation. It consists of a core antenna complex that captures photons, and an electron transfer chain that converts photonic excitation into a charge separation. The D1/D2 (PsbA/PsbD) reaction center heterodimer binds P680, the primary electron donor of PSII as well as several subsequent electron acceptors. D2 is needed for assembly of a stable PSII complex. This is Photosystem II D2 protein from Cicer arietinum (Chickpea).